A 264-amino-acid chain; its full sequence is MICOS complex subunit MIC27 (264 aa).

The N-terminal 27 residues, 1–27 (MAALRMGKLTTMPTGLIYASISVHVAK), are a transit peptide targeting the mitochondrion. At 28–110 (EEESKKQLVK…YVYLKNPPRD (83 aa)) the chain is on the mitochondrial intermembrane side. The chain crosses the membrane as a helical span at residues 111–129 (FLPKIGVITVSGLAGFISA). Over 130–137 (RKGSRFKR) the chain is Mitochondrial matrix. Residues 138–155 (IAYPLGLATLGATVCYPV) traverse the membrane as a helical segment. Residues 156–264 (QSVIIAKVAG…EDIDMYSTRS (109 aa)) lie on the Mitochondrial intermembrane side of the membrane. Residues 189–198 (KLPEHKEKTK) show a composition bias toward basic and acidic residues. The interval 189 to 264 (KLPEHKEKTK…EDIDMYSTRS (76 aa)) is disordered. A compositionally biased stretch (low complexity) spans 223–238 (AELSSETKTKSTSGAT). The span at 245–256 (KLMDHGQSHPED) shows a compositional bias: basic and acidic residues.

It belongs to the apolipoprotein O/MICOS complex subunit Mic27 family. Component of the mitochondrial contact site and cristae organizing system (MICOS) complex, composed of at least MICOS10/MIC10, CHCHD3/MIC19, CHCHD6/MIC25, APOOL/MIC27, IMMT/MIC60, APOO/MIC23/MIC26 and QIL1/MIC13. This complex was also known under the names MINOS or MitOS complex. The MICOS complex associates with mitochondrial outer membrane proteins SAMM50, MTX1 and MTX2 (together described as components of the mitochondrial outer membrane sorting assembly machinery (SAM) complex) and DNAJC11, mitochondrial inner membrane protein TMEM11 and with HSPA9. The MICOS and SAM complexes together with DNAJC11 are part of a large protein complex spanning both membranes termed the mitochondrial intermembrane space bridging (MIB) complex. Interacts with MICOS10/MIC10, IMMT/MIC60 and APOO/MIC23/MIC26.

Its subcellular location is the mitochondrion inner membrane. The protein resides in the mitochondrion. In terms of biological role, component of the MICOS complex, a large protein complex of the mitochondrial inner membrane that plays crucial roles in the maintenance of crista junctions, inner membrane architecture, and formation of contact sites to the outer membrane. Specifically binds to cardiolipin (in vitro) but not to the precursor lipid phosphatidylglycerol. Plays a crucial role in crista junction formation and mitochondrial function. The sequence is that of MICOS complex subunit MIC27 (APOL) from Bos taurus (Bovine).